The sequence spans 380 residues: Queuine tRNA-ribosyltransferase (380 aa).

Residue Asp-96 is the Proton acceptor of the active site. Substrate contacts are provided by residues 96-100 (DSGGF), Asp-150, Gln-193, and Gly-220. The segment at 251–257 (GVGAPDS) is RNA binding. Residue Asp-270 is the Nucleophile of the active site. An RNA binding; important for wobble base 34 recognition region spans residues 275–279 (TRIAR). Positions 308, 310, 313, and 339 each coordinate Zn(2+).

The protein belongs to the queuine tRNA-ribosyltransferase family. As to quaternary structure, homodimer. Within each dimer, one monomer is responsible for RNA recognition and catalysis, while the other monomer binds to the replacement base PreQ1. It depends on Zn(2+) as a cofactor.

The enzyme catalyses 7-aminomethyl-7-carbaguanine + guanosine(34) in tRNA = 7-aminomethyl-7-carbaguanosine(34) in tRNA + guanine. It participates in tRNA modification; tRNA-queuosine biosynthesis. In terms of biological role, catalyzes the base-exchange of a guanine (G) residue with the queuine precursor 7-aminomethyl-7-deazaguanine (PreQ1) at position 34 (anticodon wobble position) in tRNAs with GU(N) anticodons (tRNA-Asp, -Asn, -His and -Tyr). Catalysis occurs through a double-displacement mechanism. The nucleophile active site attacks the C1' of nucleotide 34 to detach the guanine base from the RNA, forming a covalent enzyme-RNA intermediate. The proton acceptor active site deprotonates the incoming PreQ1, allowing a nucleophilic attack on the C1' of the ribose to form the product. After dissociation, two additional enzymatic reactions on the tRNA convert PreQ1 to queuine (Q), resulting in the hypermodified nucleoside queuosine (7-(((4,5-cis-dihydroxy-2-cyclopenten-1-yl)amino)methyl)-7-deazaguanosine). The chain is Queuine tRNA-ribosyltransferase from Streptococcus thermophilus (strain CNRZ 1066).